A 195-amino-acid polypeptide reads, in one-letter code: Alkyl hydroperoxide reductase C (195 aa).

The 167-residue stretch at 4–170 (LTIGDQFPEY…VLRVLDALQS (167 aa)) folds into the Thioredoxin domain. K41 is covalently cross-linked (Isoglutamyl lysine isopeptide (Lys-Gln) (interchain with Q-Cter in protein Pup)). C61 functions as the Cysteine sulfenic acid (-SOH) intermediate in the catalytic mechanism.

It belongs to the peroxiredoxin family. AhpC/Prx1 subfamily. As to quaternary structure, homodimer; disulfide-linked, upon oxidation. 6 homodimers assemble to form a ring-like dodecamer. Identified in a complex with AhpD, DlaT and Lpd.

The protein resides in the cytoplasm. It carries out the reaction N(6)-[(R)-dihydrolipoyl]-L-lysyl-[lipoyl-carrier protein] + a hydroperoxide = N(6)-[(R)-lipoyl]-L-lysyl-[lipoyl-carrier protein] + an alcohol + H2O. Functionally, thiol-specific peroxidase that catalyzes the reduction of hydrogen peroxide and organic hydroperoxides to water and alcohols, respectively. Plays a role in cell protection against oxidative stress by detoxifying peroxides. Together with AhpD, DlaT and Lpd, constitutes an NADH-dependent peroxidase active against hydrogen and alkyl peroxides as well as serving as a peroxynitrite reductase, thus protecting the bacterium against reactive nitrogen intermediates and oxidative stress generated by the host immune system. Does not however seem to play a role in detoxification of isoniazid. In Mycolicibacterium smegmatis (strain ATCC 700084 / mc(2)155) (Mycobacterium smegmatis), this protein is Alkyl hydroperoxide reductase C.